The primary structure comprises 68 residues: MESEMATAKELKELSADDLKQRAAELRETLFQDQLKRRTGSLDNPAERTQHRRDLARVLTVLTQKTKA.

The interval 32 to 68 is disordered; the sequence is QDQLKRRTGSLDNPAERTQHRRDLARVLTVLTQKTKA. Positions 45-56 are enriched in basic and acidic residues; the sequence is PAERTQHRRDLA.

Belongs to the universal ribosomal protein uL29 family.

This chain is Large ribosomal subunit protein uL29, found in Myxococcus xanthus (strain DK1622).